Consider the following 479-residue polypeptide: ATP synthase subunit beta (479 aa).

153–160 (GGAGVGKT) is a binding site for ATP.

It belongs to the ATPase alpha/beta chains family. As to quaternary structure, F-type ATPases have 2 components, CF(1) - the catalytic core - and CF(0) - the membrane proton channel. CF(1) has five subunits: alpha(3), beta(3), gamma(1), delta(1), epsilon(1). CF(0) has three main subunits: a(1), b(2) and c(9-12). The alpha and beta chains form an alternating ring which encloses part of the gamma chain. CF(1) is attached to CF(0) by a central stalk formed by the gamma and epsilon chains, while a peripheral stalk is formed by the delta and b chains.

It localises to the cell membrane. It catalyses the reaction ATP + H2O + 4 H(+)(in) = ADP + phosphate + 5 H(+)(out). Functionally, produces ATP from ADP in the presence of a proton gradient across the membrane. The catalytic sites are hosted primarily by the beta subunits. In Lactobacillus helveticus (strain DPC 4571), this protein is ATP synthase subunit beta.